Consider the following 929-residue polypeptide: Chitin synthase 1 (929 aa).

Positions 1-12 (MAYRGAGGPGGG) are enriched in gly residues. Disordered stretches follow at residues 1 to 43 (MAYR…QEDE) and 114 to 156 (MGGH…GGGL). Composition is skewed to polar residues over residues 21–33 (QDLNPHSQYSNVQ) and 140–149 (SWVQRQNPNA). Residue Asn560 is glycosylated (N-linked (GlcNAc...) asparagine). A run of 5 helical transmembrane segments spans residues 587–607 (FFFHVQLIYNILNVIFTWFSL), 643–663 (LFNAVLKYIYLAFVILQFILA), 678–698 (SFFVFSVIQAYILVLSGYLVV), 730–750 (VILLALIAIYGIYFIASFMYL), and 758–778 (SFPYYMLLMSTYINILMVYAF). N-linked (GlcNAc...) asparagine glycosylation occurs at Asn801. A run of 2 helical transmembrane segments spans residues 857–877 (TMLVVLWLFSNCLLAVAITSD) and 897–917 (FLLFSTAFLSLIRFIGFLWFL).

Belongs to the chitin synthase family. Class III subfamily.

Its subcellular location is the cell membrane. It carries out the reaction [(1-&gt;4)-N-acetyl-beta-D-glucosaminyl](n) + UDP-N-acetyl-alpha-D-glucosamine = [(1-&gt;4)-N-acetyl-beta-D-glucosaminyl](n+1) + UDP + H(+). Polymerizes chitin, a structural polymer of the cell wall and septum, by transferring the sugar moiety of UDP-GlcNAc to the non-reducing end of the growing chitin polymer. CHS1 and CHS3 have compensatory functions in cell wall modifications in responses to stresses. Involved in appressoria formation and required for full virulence. The chain is Chitin synthase 1 from Pyricularia oryzae (strain 70-15 / ATCC MYA-4617 / FGSC 8958) (Rice blast fungus).